The sequence spans 396 residues: tRNA (guanine-N(7)-)-methyltransferase non-catalytic subunit wuho (396 aa).

WD repeat units follow at residues 75-115 (KVEV…AQLL), 162-201 (GHLS…DIHS), 205-243 (GHKE…ELLL), and 302-342 (AGTW…RASG).

It belongs to the WD repeat TRM82 family. As to quaternary structure, forms a heterodimer with the catalytic subunit Mettl1. Interacts with mei-P26 and weakly interacts with bgcn; required for the function or formation of the mei-P26-bgcn-bam-sxl complex. Interacts with nanos; may be involved in mei-P26-dependent derepression of the BMP signaling pathway. Interacts with Myc; the interaction may be mediated by mei-P26 and may be involved in the regulation of ribosome biogenesis. In terms of tissue distribution, in testis, it is present at high level in hub cells, a niche for germline stem cells of testis. Ubiquitously expressed in all testicular cells throughout spermatogenesis. Ubiquitously expressed in all germline and somatic cells of the ovary.

It localises to the nucleus. Its subcellular location is the cytoplasm. It functions in the pathway tRNA modification; N(7)-methylguanine-tRNA biosynthesis. Functionally, required for the Mettl1-dependent formation of N(7)-methylguanine at position 46 (m7G46) in tRNA. In the Mettl1-wuho methyltransferase complex, it is required to stabilize and induce conformational changes of the catalytic subunit. Required for binding of nanos mRNA and repression of translation by the mei-P26-bgcn-bam-sxl complex. May cooperate with mei-P26 and nanos to derepress the BMP signaling pathway. May cooperate with mei-P26 to suppress expression of a subset of microRNAs. May cooperate with mei-P26 to regulate bam expression levels in germline cells during gametogenesis. Required to promote mitosis to meiosis transition during gametogenesis. May regulate germline cell division in part by regulating ribosome biogenesis. The sequence is that of tRNA (guanine-N(7)-)-methyltransferase non-catalytic subunit wuho from Drosophila pseudoobscura pseudoobscura (Fruit fly).